The chain runs to 430 residues: Enolase (430 aa).

Gln163 provides a ligand contact to (2R)-2-phosphoglycerate. The active-site Proton donor is the Glu205. Residues Asp242, Glu287, and Asp314 each contribute to the Mg(2+) site. Residues Lys339, Arg368, Ser369, and Lys390 each contribute to the (2R)-2-phosphoglycerate site. Lys339 acts as the Proton acceptor in catalysis.

The protein belongs to the enolase family. Requires Mg(2+) as cofactor.

Its subcellular location is the cytoplasm. The protein resides in the secreted. It is found in the cell surface. The enzyme catalyses (2R)-2-phosphoglycerate = phosphoenolpyruvate + H2O. The protein operates within carbohydrate degradation; glycolysis; pyruvate from D-glyceraldehyde 3-phosphate: step 4/5. In terms of biological role, catalyzes the reversible conversion of 2-phosphoglycerate (2-PG) into phosphoenolpyruvate (PEP). It is essential for the degradation of carbohydrates via glycolysis. The protein is Enolase of Geobacillus sp. (strain WCH70).